The following is a 467-amino-acid chain: ADAM DEC1 (467 aa).

The N-terminal stretch at 1-33 (MLPGTSRLPTEASMSWVLLSVLWLIIQIQVIDA) is a signal peptide. The propeptide occupies 34–208 (TLTPELKPHE…LRTSRSLKNP (175 aa)). Asn61 and Asn236 each carry an N-linked (GlcNAc...) asparagine glycan. Residues 217–411 (KYIGLFLVLD…RNARCLLLAP (195 aa)) enclose the Peptidase M12B domain. Cystine bridges form between Cys327–Cys406 and Cys368–Cys373. A Zn(2+)-binding site is contributed by His351. Glu352 is an active-site residue. Zn(2+) is bound by residues His355 and Asp361. Residues 418–467 (KPTCGNQVLDVGEECDCGSPEECTNLCCEPLTCRLKSQPDCSEASNHITE) enclose the Disintegrin domain.

Zn(2+) is required as a cofactor. As to expression, expressed highly in uterus during pregnancy.

It localises to the secreted. May play an important role in the control of the immune response and during pregnancy. This is ADAM DEC1 (Adamdec1) from Mus musculus (Mouse).